A 211-amino-acid polypeptide reads, in one-letter code: Major fimbrial subunit (211 aa).

A signal peptide spans 1–20; that stretch reads MKKTLLGSLILLAFAGNVQA. A disulfide bridge links cysteine 43 with cysteine 83.

It belongs to the fimbrial protein family.

It is found in the fimbrium. Mediates adherence to oropharyngeal epithelial cells. Helps the airway colonization process. The protein is Major fimbrial subunit (hifA) of Haemophilus influenzae.